The chain runs to 342 residues: Succinylglutamate desuccinylase (342 aa).

Zn(2+) is bound by residues histidine 64, glutamate 67, and histidine 159. Glutamate 222 is a catalytic residue.

Belongs to the AspA/AstE family. Succinylglutamate desuccinylase subfamily. Zn(2+) serves as cofactor.

It catalyses the reaction N-succinyl-L-glutamate + H2O = L-glutamate + succinate. Its pathway is amino-acid degradation; L-arginine degradation via AST pathway; L-glutamate and succinate from L-arginine: step 5/5. Its function is as follows. Transforms N(2)-succinylglutamate into succinate and glutamate. In Burkholderia orbicola (strain MC0-3), this protein is Succinylglutamate desuccinylase.